The following is a 253-amino-acid chain: Phosphate import ATP-binding protein PstB (253 aa).

An ABC transporter domain is found at 8–248 (IQVRDLDLFY…PRDKRTEDYI (241 aa)). 40–47 (GPSGCGKS) is an ATP binding site.

This sequence belongs to the ABC transporter superfamily. Phosphate importer (TC 3.A.1.7) family. As to quaternary structure, the complex is composed of two ATP-binding proteins (PstB), two transmembrane proteins (PstC and PstA) and a solute-binding protein (PstS).

The protein localises to the cell membrane. The enzyme catalyses phosphate(out) + ATP + H2O = ADP + 2 phosphate(in) + H(+). Part of the ABC transporter complex PstSACB involved in phosphate import. Responsible for energy coupling to the transport system. The sequence is that of Phosphate import ATP-binding protein PstB from Clostridium perfringens (strain ATCC 13124 / DSM 756 / JCM 1290 / NCIMB 6125 / NCTC 8237 / Type A).